A 198-amino-acid polypeptide reads, in one-letter code: 3-isopropylmalate dehydratase small subunit (198 aa).

This sequence belongs to the LeuD family. LeuD type 1 subfamily. In terms of assembly, heterodimer of LeuC and LeuD.

The enzyme catalyses (2R,3S)-3-isopropylmalate = (2S)-2-isopropylmalate. The protein operates within amino-acid biosynthesis; L-leucine biosynthesis; L-leucine from 3-methyl-2-oxobutanoate: step 2/4. In terms of biological role, catalyzes the isomerization between 2-isopropylmalate and 3-isopropylmalate, via the formation of 2-isopropylmaleate. The sequence is that of 3-isopropylmalate dehydratase small subunit from Mycolicibacterium paratuberculosis (strain ATCC BAA-968 / K-10) (Mycobacterium paratuberculosis).